We begin with the raw amino-acid sequence, 578 residues long: Sulfite reductase [NADPH] hemoprotein beta-component (578 aa).

Residues 1–11 (MSANQQSNSQE) are compositionally biased toward polar residues. The interval 1–20 (MSANQQSNSQEVLGEVLGPL) is disordered. Residues Cys-441, Cys-447, Cys-487, and Cys-491 each contribute to the [4Fe-4S] cluster site. Position 491 (Cys-491) interacts with siroheme.

This sequence belongs to the nitrite and sulfite reductase 4Fe-4S domain family. Alpha(8)-beta(8). The alpha component is a flavoprotein, the beta component is a hemoprotein. Siroheme serves as cofactor. The cofactor is [4Fe-4S] cluster.

The catalysed reaction is hydrogen sulfide + 3 NADP(+) + 3 H2O = sulfite + 3 NADPH + 4 H(+). Its pathway is sulfur metabolism; hydrogen sulfide biosynthesis; hydrogen sulfide from sulfite (NADPH route): step 1/1. Functionally, component of the sulfite reductase complex that catalyzes the 6-electron reduction of sulfite to sulfide. This is one of several activities required for the biosynthesis of L-cysteine from sulfate. This is Sulfite reductase [NADPH] hemoprotein beta-component from Vibrio campbellii (strain ATCC BAA-1116).